The following is a 324-amino-acid chain: 4-hydroxy-2-oxoglutarate aldolase, mitochondrial (324 aa).

The N-terminal 22 residues, 1 to 22, are a transit peptide targeting the mitochondrion; it reads MFAHRSFSLLCRRSAVTSWRSQ. 74 to 75 is a binding site for substrate; it reads SN. Catalysis depends on Lys193, which acts as the Schiff-base intermediate with substrate. Ser195 and Gly219 together coordinate substrate.

This sequence belongs to the DapA family. As to quaternary structure, homotetramer.

The protein resides in the mitochondrion. The enzyme catalyses (4S)-4-hydroxy-2-oxoglutarate = glyoxylate + pyruvate. It catalyses the reaction (4R)-4-hydroxy-2-oxoglutarate = glyoxylate + pyruvate. Inhibited by divalent cations. Functionally, catalyzes the final step in the metabolic pathway of hydroxyproline. This is 4-hydroxy-2-oxoglutarate aldolase, mitochondrial from Danio rerio (Zebrafish).